The sequence spans 389 residues: Alpha-2B adrenergic receptor (389 aa).

The chain crosses the membrane as a helical span at residues 1-25 (AIAAVITFLILFTIFGNALVILAVL). Over 26-36 (TSRSLRAPQNL) the chain is Cytoplasmic. Residues 37–62 (FLVSLAAADILVATLIIPFSLANELL) form a helical membrane-spanning segment. The Extracellular segment spans residues 63 to 72 (GYWYFWRTWC). A disulfide bridge links C72 with C151. The helical transmembrane segment at 73–95 (EVYLALDVLFCTSSIVHLCAISL) threads the bilayer. At 96–117 (DRYWAVSRALEYNSKRTPRRIK) the chain is on the cytoplasmic side. Residues 118–140 (CIILTVWLIAAAISLPPLIYKGD) traverse the membrane as a helical segment. Residues 141–156 (QGPQPRGRPQCMLNQE) are Extracellular-facing. A helical transmembrane segment spans residues 157–180 (AWYILSSSIGSFFAPCLIMILVYL). The Cytoplasmic portion of the chain corresponds to 181-353 (RIYLIAKRSN…LTREKRFTFV (173 aa)). Disordered stretches follow at residues 192–218 (RGPRAKGAPGEGESKQPHPLTAGPLAL) and 231–310 (DGEA…HLQQ). The segment covering 234–249 (ANGHSKLTGEKERETS) has biased composition (basic and acidic residues). Residues 354–377 (LTVVIGVFVLCWFPFFFSYSLGAI) form a helical membrane-spanning segment. Over 378 to 386 (CPQHCKVPH) the chain is Extracellular. A helical membrane pass occupies residues 387 to 389 (GLF).

The protein belongs to the G-protein coupled receptor 1 family. Adrenergic receptor subfamily. ADRA2B sub-subfamily. Interacts with RAB26. Interacts with PPP1R9B.

Its subcellular location is the cell membrane. Functionally, alpha-2 adrenergic receptors mediate the catecholamine-induced inhibition of adenylate cyclase through the action of G proteins. In Procavia capensis habessinica (Abyssinian hyrax), this protein is Alpha-2B adrenergic receptor (ADRA2B).